The chain runs to 296 residues: Arginine/serine-rich protein 1 (296 aa).

The disordered stretch occupies residues 1–131 (MSNYVNDMWP…RSRSRSRERS (131 aa)). Residue serine 12 is modified to Phosphoserine. The segment covering 20-31 (SASRSGGSSRLS) has biased composition (low complexity). Over residues 32–125 (SRSRSRSFSR…RSRSRSRSRS (94 aa)) the composition is skewed to basic residues. Residues serine 111 and serine 113 each carry the phosphoserine modification. An Omega-N-methylarginine modification is found at arginine 141. The span at 156 to 165 (ERSRWRDRSR) shows a compositional bias: basic and acidic residues. 2 disordered regions span residues 156–175 (ERSR…TPFR) and 217–296 (SHGI…WIPV). Polar residues predominate over residues 245 to 261 (EKPSQQRSIAFSSNNSV). Residues 272–287 (ATEETSSRSPKIDKKK) show a composition bias toward basic and acidic residues. At serine 280 the chain carries Phosphoserine.

The protein belongs to the RSRP family. In terms of processing, phosphorylated. Phosphorylation at Ser-111 and Ser-113 mediates the interaction with spliceosome proteins.

It localises to the nucleus. Its function is as follows. Probably acts as a spliceosomal factor that contributes to spliceosome assembly and regulates the isoform switching of proteins such as PARP6. In Macaca fascicularis (Crab-eating macaque), this protein is Arginine/serine-rich protein 1 (RSRP1).